The primary structure comprises 499 residues: Low-affinity inorganic phosphate transporter PitB (499 aa).

Helical transmembrane passes span 5-25, 52-72, 94-114, 124-144, 155-175, 207-227, 233-253, 382-402, 430-450, and 473-493; these read FVGLDIYTGLLLLLALAFVLF, LAVVMAAFFNFFGVLLGGLSV, LAMVFSMLLAAIIWNLGTWFF, LIGAIIGIGLTNALLTGSSVM, IFSSLIVSPIVGLVIAGGLIF, PFWTRIALIVSAAGVAFSHGA, GIGLVMLVLVGIAPAGFVVNM, APVWIIMAVALALGIGTMIGW, AAVSIGLASYIGMPVSTTHVL, and ILMAWVFTLPAAIFLSGGLYW.

This sequence belongs to the inorganic phosphate transporter (PiT) (TC 2.A.20) family. Pit subfamily.

The protein resides in the cell inner membrane. It carries out the reaction phosphate(in) + H(+)(in) = phosphate(out) + H(+)(out). Low-affinity inorganic phosphate transporter. The protein is Low-affinity inorganic phosphate transporter PitB of Escherichia coli (strain K12).